A 494-amino-acid polypeptide reads, in one-letter code: Ketol-acid reductoisomerase (NADP(+)) (494 aa).

The KARI N-terminal Rossmann domain maps to 14 to 208; sequence LDQLGRCRFM…GGHRAGVLES (195 aa). Residues 45–48, arginine 68, arginine 76, serine 78, and 108–110 contribute to the NADP(+) site; these read CGAQ and DKQ. Histidine 132 is a catalytic residue. Glycine 158 lines the NADP(+) pocket. 2 KARI C-terminal knotted domains span residues 209 to 344 and 345 to 487; these read SFVA…NYPV and TDVE…MTDM. The Mg(2+) site is built by aspartate 217, glutamate 221, glutamate 389, and glutamate 393. Serine 414 serves as a coordination point for substrate.

The protein belongs to the ketol-acid reductoisomerase family. Requires Mg(2+) as cofactor.

The enzyme catalyses (2R)-2,3-dihydroxy-3-methylbutanoate + NADP(+) = (2S)-2-acetolactate + NADPH + H(+). The catalysed reaction is (2R,3R)-2,3-dihydroxy-3-methylpentanoate + NADP(+) = (S)-2-ethyl-2-hydroxy-3-oxobutanoate + NADPH + H(+). It participates in amino-acid biosynthesis; L-isoleucine biosynthesis; L-isoleucine from 2-oxobutanoate: step 2/4. It functions in the pathway amino-acid biosynthesis; L-valine biosynthesis; L-valine from pyruvate: step 2/4. In terms of biological role, involved in the biosynthesis of branched-chain amino acids (BCAA). Catalyzes an alkyl-migration followed by a ketol-acid reduction of (S)-2-acetolactate (S2AL) to yield (R)-2,3-dihydroxy-isovalerate. In the isomerase reaction, S2AL is rearranged via a Mg-dependent methyl migration to produce 3-hydroxy-3-methyl-2-ketobutyrate (HMKB). In the reductase reaction, this 2-ketoacid undergoes a metal-dependent reduction by NADPH to yield (R)-2,3-dihydroxy-isovalerate. The protein is Ketol-acid reductoisomerase (NADP(+)) of Photobacterium profundum (strain SS9).